The primary structure comprises 615 residues: MRTFLSLKTCLLSALLLCVNSIAASKIISVSDFGLKPDSRINAVPFIQKAIDACKQHPGSTLVFPKGRYDFWAQHAIEKDYYETNTYDVNPKILAVLLEQINDLTIDGNGSEFIMHGRMQPFTLDHCRNITLKNFSVDWEIPLTAQGIVTQSTSEYLEIEIDSHQYPYIIENKRLTFVGEGWKSSLWAIMQFDPDTHLVLPNTGDNLGWRSYDATEINPGLIRLSDPKKEADKFFPAPGTVLVLRHSTRDHAGIFIYHSMDTKLENVKLFHTCGLGILSQYSKNISFNDVHIIPNTSKKRVLSGHDDGFHFMGCSGLLKIENCSWAGLMDDPINIHGTCSRIMEVLSPTRIKCKFMQDMSEGMEWGRPDETIGFIEHKTMRTVATGKMNKFEALNKAEFIIELSVPLPAGVEAGYVIENLTCTPDAEIRNCHFGSCRARGLLVSTPGKVIIENNVFESSGSAILIAGDANAWYESGAVKDVLIRNNDFRYPCNSSIYQFCEAVISIDPEIPTPEQKYPYHRNIRIMDNTFHLFDYPILFARSVNGLTFSSNTLIRDTTYQPYHYRKEGITLEACKSVVISNNKIEGDVLGRIVTIEKMKPSDVKISKNPFFKLKK.

The first 23 residues, 1–23 (MRTFLSLKTCLLSALLLCVNSIA), serve as a signal peptide directing secretion. 6 PbH1 repeats span residues 282–313 (SKNI…HFMG), 423–445 (TPDA…LVST), 446–467 (PGKV…LIAG), 478–500 (VKDV…YQFC), 520–541 (HRNI…LFAR), and 543–573 (VNGL…TLEA).

This sequence belongs to the glycosyl hydrolase 110 family. B subfamily.

It carries out the reaction Hydrolysis of terminal, non-reducing branched (1-&gt;3)-alpha-D-galactosidic residues, producing free D-galactose.. The enzyme catalyses Hydrolysis of terminal, non-reducing linear (1-&gt;3)-alpha-D-galactosidic residues, producing free D-galactose.. The catalysed reaction is Hydrolysis of terminal, non-reducing alpha-D-galactose residues in alpha-D-galactosides, including galactose oligosaccharides, galactomannans and galactolipids.. Its function is as follows. Alpha-galactosidase. Removes both branched alpha-1,3-linked galactose residues of blood group B antigens and linear alpha-1,3-linked galactose structures. The protein is Alpha-1,3-galactosidase B (glaB) of Bacteroides thetaiotaomicron (strain ATCC 29148 / DSM 2079 / JCM 5827 / CCUG 10774 / NCTC 10582 / VPI-5482 / E50).